The primary structure comprises 161 residues: Cell division protein SepF 2 (161 aa).

Positions 19-47 (EDSEKAPELSSSRETKTKNQNQSKSLLRS) are disordered. Residues 21–35 (SEKAPELSSSRETKT) are compositionally biased toward basic and acidic residues.

This sequence belongs to the SepF family. As to quaternary structure, homodimer. Interacts with FtsZ.

The protein localises to the cytoplasm. In terms of biological role, cell division protein that is part of the divisome complex and is recruited early to the Z-ring. Probably stimulates Z-ring formation, perhaps through the cross-linking of FtsZ protofilaments. Its function overlaps with FtsA. The polypeptide is Cell division protein SepF 2 (Desulforamulus reducens (strain ATCC BAA-1160 / DSM 100696 / MI-1) (Desulfotomaculum reducens)).